The sequence spans 547 residues: Apolipoprotein N-acyltransferase (547 aa).

6 helical membrane-spanning segments follow: residues 31–51 (PLPAWSLAPVQVIALAVAAHA), 65–85 (GWLFAMFSFSLGLYWLYVSMH), 89–109 (GLAAPLAAAGVLALSAFLALF), 144–164 (AACWAALEWLRAVVLTGFPWL), 181–201 (LLGVHGMALLAAFAAAALAGL), and 215–235 (LAAGVALLLAGAGWLLGQFSW). In terms of domain architecture, CN hydrolase spans 248–511 (VQGNVEQSQK…AGVLPVAVQG (264 aa)). Residue Glu-292 is the Proton acceptor of the active site. Lys-366 is a catalytic residue. Cys-416 acts as the Nucleophile in catalysis.

It belongs to the CN hydrolase family. Apolipoprotein N-acyltransferase subfamily.

The protein resides in the cell inner membrane. The enzyme catalyses N-terminal S-1,2-diacyl-sn-glyceryl-L-cysteinyl-[lipoprotein] + a glycerophospholipid = N-acyl-S-1,2-diacyl-sn-glyceryl-L-cysteinyl-[lipoprotein] + a 2-acyl-sn-glycero-3-phospholipid + H(+). It participates in protein modification; lipoprotein biosynthesis (N-acyl transfer). In terms of biological role, catalyzes the phospholipid dependent N-acylation of the N-terminal cysteine of apolipoprotein, the last step in lipoprotein maturation. The protein is Apolipoprotein N-acyltransferase of Bordetella bronchiseptica (strain ATCC BAA-588 / NCTC 13252 / RB50) (Alcaligenes bronchisepticus).